The following is a 426-amino-acid chain: Histidine--tRNA ligase (426 aa).

This sequence belongs to the class-II aminoacyl-tRNA synthetase family. As to quaternary structure, homodimer.

The protein localises to the cytoplasm. It carries out the reaction tRNA(His) + L-histidine + ATP = L-histidyl-tRNA(His) + AMP + diphosphate + H(+). This Microcystis aeruginosa (strain NIES-843 / IAM M-2473) protein is Histidine--tRNA ligase.